The primary structure comprises 378 residues: Erythronate-4-phosphate dehydrogenase (378 aa).

Substrate contacts are provided by serine 45 and threonine 66. Aspartate 146 and threonine 175 together coordinate NAD(+). Arginine 208 is an active-site residue. Aspartate 232 serves as a coordination point for NAD(+). Glutamate 237 is an active-site residue. Histidine 254 functions as the Proton donor in the catalytic mechanism. Glycine 257 lines the NAD(+) pocket. Tyrosine 258 provides a ligand contact to substrate.

This sequence belongs to the D-isomer specific 2-hydroxyacid dehydrogenase family. PdxB subfamily. As to quaternary structure, homodimer.

The protein localises to the cytoplasm. It catalyses the reaction 4-phospho-D-erythronate + NAD(+) = (R)-3-hydroxy-2-oxo-4-phosphooxybutanoate + NADH + H(+). It participates in cofactor biosynthesis; pyridoxine 5'-phosphate biosynthesis; pyridoxine 5'-phosphate from D-erythrose 4-phosphate: step 2/5. Functionally, catalyzes the oxidation of erythronate-4-phosphate to 3-hydroxy-2-oxo-4-phosphonooxybutanoate. This is Erythronate-4-phosphate dehydrogenase from Pectobacterium atrosepticum (strain SCRI 1043 / ATCC BAA-672) (Erwinia carotovora subsp. atroseptica).